A 160-amino-acid polypeptide reads, in one-letter code: Conopressin/conophysin, isoform 2 (160 aa).

The first 30 residues, 1–30, serve as a signal peptide directing secretion; sequence MKCSVLQMSRLSWAMCLMLLMLLLLGTAQG. An intrachain disulfide couples cysteine 31 to cysteine 36. At glycine 39 the chain carries Glycine amide. A propeptide spanning residues 40 to 47 is cleaved from the precursor; that stretch reads GKRAVDAL. 7 disulfide bridges follow: cysteine 53-cysteine 97, cysteine 56-cysteine 70, cysteine 64-cysteine 87, cysteine 71-cysteine 77, cysteine 104-cysteine 118, cysteine 112-cysteine 130, and cysteine 119-cysteine 124.

This sequence belongs to the vasopressin/oxytocin family. Expressed by the venom gland.

Its subcellular location is the secreted. Its function is as follows. Targets vasopressin-oxytocin related receptors. In Conus monile (Necklace cone), this protein is Conopressin/conophysin, isoform 2.